The sequence spans 365 residues: Phospho-N-acetylmuramoyl-pentapeptide-transferase (365 aa).

Helical transmembrane passes span 15–35 (PSGT…AVLI), 51–71 (VPVL…VPLL), 96–116 (TMGG…FAGF), 121–141 (IAVA…DWQV), 156–176 (LILQ…TAPE), 180–200 (ITFF…LAGF), 217–237 (GLAG…ALPA), 238–258 (HPGL…FIYH), 279–299 (LAAA…SGIF), and 344–364 (TQIV…SFIL).

Belongs to the glycosyltransferase 4 family. MraY subfamily. The cofactor is Mg(2+).

It is found in the cell inner membrane. It carries out the reaction UDP-N-acetyl-alpha-D-muramoyl-L-alanyl-gamma-D-glutamyl-meso-2,6-diaminopimeloyl-D-alanyl-D-alanine + di-trans,octa-cis-undecaprenyl phosphate = di-trans,octa-cis-undecaprenyl diphospho-N-acetyl-alpha-D-muramoyl-L-alanyl-D-glutamyl-meso-2,6-diaminopimeloyl-D-alanyl-D-alanine + UMP. The protein operates within cell wall biogenesis; peptidoglycan biosynthesis. Functionally, catalyzes the initial step of the lipid cycle reactions in the biosynthesis of the cell wall peptidoglycan: transfers peptidoglycan precursor phospho-MurNAc-pentapeptide from UDP-MurNAc-pentapeptide onto the lipid carrier undecaprenyl phosphate, yielding undecaprenyl-pyrophosphoryl-MurNAc-pentapeptide, known as lipid I. The polypeptide is Phospho-N-acetylmuramoyl-pentapeptide-transferase (Picosynechococcus sp. (strain ATCC 27264 / PCC 7002 / PR-6) (Agmenellum quadruplicatum)).